The primary structure comprises 216 residues: Flagellar transcriptional regulator FlhC (216 aa).

Cys-137, Cys-140, Cys-157, and Cys-160 together coordinate Zn(2+).

It belongs to the FlhC family. As to quaternary structure, heterohexamer composed of two FlhC and four FlhD subunits. Each FlhC binds a FlhD dimer, forming a heterotrimer, and a hexamer assembles by dimerization of two heterotrimers. It depends on Zn(2+) as a cofactor.

It is found in the cytoplasm. In terms of biological role, functions in complex with FlhD as a master transcriptional regulator that regulates transcription of several flagellar and non-flagellar operons by binding to their promoter region. Activates expression of class 2 flagellar genes, including fliA, which is a flagellum-specific sigma factor that turns on the class 3 genes. Also regulates genes whose products function in a variety of physiological pathways. This Paraburkholderia atlantica protein is Flagellar transcriptional regulator FlhC.